The chain runs to 276 residues: 2,3,4,5-tetrahydropyridine-2,6-dicarboxylate N-succinyltransferase (276 aa).

Arginine 108 and aspartate 145 together coordinate substrate.

This sequence belongs to the transferase hexapeptide repeat family. In terms of assembly, homotrimer.

The protein localises to the cytoplasm. The catalysed reaction is (S)-2,3,4,5-tetrahydrodipicolinate + succinyl-CoA + H2O = (S)-2-succinylamino-6-oxoheptanedioate + CoA. It functions in the pathway amino-acid biosynthesis; L-lysine biosynthesis via DAP pathway; LL-2,6-diaminopimelate from (S)-tetrahydrodipicolinate (succinylase route): step 1/3. The chain is 2,3,4,5-tetrahydropyridine-2,6-dicarboxylate N-succinyltransferase from Caulobacter vibrioides (strain ATCC 19089 / CIP 103742 / CB 15) (Caulobacter crescentus).